A 290-amino-acid polypeptide reads, in one-letter code: 33 kDa chaperonin (290 aa).

Cystine bridges form between C231-C233 and C264-C267.

Belongs to the HSP33 family. Under oxidizing conditions two disulfide bonds are formed involving the reactive cysteines. Under reducing conditions zinc is bound to the reactive cysteines and the protein is inactive.

The protein localises to the cytoplasm. Functionally, redox regulated molecular chaperone. Protects both thermally unfolding and oxidatively damaged proteins from irreversible aggregation. Plays an important role in the bacterial defense system toward oxidative stress. In Photorhabdus laumondii subsp. laumondii (strain DSM 15139 / CIP 105565 / TT01) (Photorhabdus luminescens subsp. laumondii), this protein is 33 kDa chaperonin.